The following is a 649-amino-acid chain: Endoglucanase D (649 aa).

A signal peptide spans 1-41 (MSRMTLKSSMKKRVLSLLIAVVFLSLTGVFPSGLIETKVSA). D201 serves as the catalytic Nucleophile. Active-site residues include H516 and D546. E555 (proton donor) is an active-site residue. A Dockerin domain is found at 579–649 (NEVLYGDVND…LIRVIEKLPI (71 aa)).

Belongs to the glycosyl hydrolase 9 (cellulase E) family. The cofactor is Ca(2+).

It catalyses the reaction Endohydrolysis of (1-&gt;4)-beta-D-glucosidic linkages in cellulose, lichenin and cereal beta-D-glucans.. Its function is as follows. This enzyme catalyzes the endohydrolysis of 1,4-beta-glucosidic linkages in cellulose, lichenin and cereal beta-D-glucans. This is Endoglucanase D (celD) from Acetivibrio thermocellus (strain ATCC 27405 / DSM 1237 / JCM 9322 / NBRC 103400 / NCIMB 10682 / NRRL B-4536 / VPI 7372) (Clostridium thermocellum).